Here is a 201-residue protein sequence, read N- to C-terminus: Casparian strip membrane protein 7 (201 aa).

The span at 1 to 11 shows a compositional bias: acidic residues; the sequence is MEAGEEIEDGE. A disordered region spans residues 1–26; sequence MEAGEEIEDGEPSTPTYKAHHPPPHL. Topologically, residues 1-34 are cytoplasmic; sequence MEAGEEIEDGEPSTPTYKAHHPPPHLPPPMRSSG. The chain crosses the membrane as a helical span at residues 35 to 55; it reads VSLVLSVADLVLRFVAIGGTA. Residues 56–86 lie on the Extracellular side of the membrane; it reads GSAIAMATTSETLPFAAPFVRFRAEYSDLPT. A helical transmembrane segment spans residues 87–107; it reads LMFFVVASSVVCAYLVLSLPA. The Cytoplasmic segment spans residues 108–128; that stretch reads SVVHVVRPGARSSRAILAFLD. The helical transmembrane segment at 129–149 threads the bilayer; sequence TVMLALLTASASAAAAIVYLA. At 150 to 171 the chain is on the extracellular side; it reads HRGSARANWLGICQQFTSFCQR. Residues 172–192 traverse the membrane as a helical segment; that stretch reads ITASLVGSFAAAVVLVALVFL. The Cytoplasmic portion of the chain corresponds to 193 to 201; the sequence is SALSLARRA.

Belongs to the Casparian strip membrane proteins (CASP) family. As to quaternary structure, homodimer and heterodimers.

It localises to the cell membrane. Regulates membrane-cell wall junctions and localized cell wall deposition. Required for establishment of the Casparian strip membrane domain (CSD) and the subsequent formation of Casparian strips, a cell wall modification of the root endodermis that determines an apoplastic barrier between the intraorganismal apoplasm and the extraorganismal apoplasm and prevents lateral diffusion. In Oryza sativa subsp. japonica (Rice), this protein is Casparian strip membrane protein 7.